Consider the following 61-residue polypeptide: Metallothionein-1E (61 aa).

Methionine 1 is subject to N-acetylmethionine. The segment at 1–29 (MDPNCSCPTGGSCSCAGSCTCKACRCTSC) is beta. A divalent metal cation contacts are provided by cysteine 5, cysteine 7, cysteine 13, cysteine 15, cysteine 19, cysteine 21, cysteine 24, cysteine 26, cysteine 29, cysteine 33, cysteine 34, cysteine 36, cysteine 37, cysteine 41, cysteine 44, cysteine 48, cysteine 50, cysteine 57, cysteine 59, and cysteine 60. The segment at 30-61 (KKSCCSCCPVGCAKCAQGCICKGASDKCSCCA) is alpha.

It belongs to the metallothionein superfamily. Type 1 family. Monomer.

In terms of biological role, metallothioneins have a high content of cysteine residues that bind various heavy metals; these proteins are transcriptionally regulated by both heavy metals and glucocorticoids. This Sus scrofa (Pig) protein is Metallothionein-1E (MT1E).